Reading from the N-terminus, the 437-residue chain is Putative metabolite transport protein NicT (437 aa).

A run of 12 helical transmembrane segments spans residues leucine 28–phenylalanine 48, leucine 66–leucine 86, leucine 93–threonine 113, phenylalanine 123–tryptophan 143, isoleucine 152–glycine 172, tryptophan 189–leucine 209, valine 254–tryptophan 274, isoleucine 290–alanine 310, tryptophan 320–serine 340, valine 347–leucine 367, glycine 374–valine 394, and alanine 411–proline 431.

The protein belongs to the major facilitator superfamily.

It localises to the membrane. In terms of biological role, probable transporter, possibly involved in the aerobic nicotinate degradation pathway. The polypeptide is Putative metabolite transport protein NicT (nicT) (Pseudomonas putida (strain ATCC 47054 / DSM 6125 / CFBP 8728 / NCIMB 11950 / KT2440)).